A 270-amino-acid chain; its full sequence is Pyrroline-5-carboxylate reductase (270 aa).

Belongs to the pyrroline-5-carboxylate reductase family.

The protein localises to the cytoplasm. It catalyses the reaction L-proline + NADP(+) = (S)-1-pyrroline-5-carboxylate + NADPH + 2 H(+). The catalysed reaction is L-proline + NAD(+) = (S)-1-pyrroline-5-carboxylate + NADH + 2 H(+). Its pathway is amino-acid biosynthesis; L-proline biosynthesis; L-proline from L-glutamate 5-semialdehyde: step 1/1. Its function is as follows. Catalyzes the reduction of 1-pyrroline-5-carboxylate (PCA) to L-proline. The polypeptide is Pyrroline-5-carboxylate reductase (Methanosarcina acetivorans (strain ATCC 35395 / DSM 2834 / JCM 12185 / C2A)).